The primary structure comprises 412 residues: Elongation factor 1-gamma 2 (412 aa).

S2 is modified (N-acetylserine). The region spanning 2–77 (SQGTLYINRS…YLANQVADEK (76 aa)) is the GST N-terminal domain. Residues 86 to 217 (DVIEKSQILR…AEKALTYTPP (132 aa)) form the GST C-terminal domain. Residues 216 to 253 (PPKKQKAEKPKAEKSKAEKKKDEAKPADDAAPAKKPKH) form a disordered region. Basic and acidic residues predominate over residues 220-247 (QKAEKPKAEKSKAEKKKDEAKPADDAAP). The 162-residue stretch at 251–412 (PKHPLEALGK…KEIVDGKVLK (162 aa)) folds into the EF-1-gamma C-terminal domain.

As to quaternary structure, the eukaryotic elongation factor 1 complex (eEF1) is probably a heterohexamer. Two trimeric complexes, each composed of eEF1A (TEF1 or TEF2), eEF1Balpha (EFB1) and eEF1Bgamma (CAM1 or TEF4), are probably dimerized via the eF1Bgamma subunits. The eEF1B subcomplex with the GEF activity is formed of eEF1Balpha and eEF1Bgamma. TEF4 interacts with EFB1.

The protein localises to the cytoplasm. Its pathway is protein biosynthesis; polypeptide chain elongation. In terms of biological role, subunit of the eukaryotic elongation factor 1 complex (eEF1). Probably plays a role in anchoring the complex to other cellular components. The sequence is that of Elongation factor 1-gamma 2 (TEF4) from Saccharomyces cerevisiae (strain ATCC 204508 / S288c) (Baker's yeast).